The following is a 271-amino-acid chain: Formamidopyrimidine-DNA glycosylase (271 aa).

P2 serves as the catalytic Schiff-base intermediate with DNA. E3 functions as the Proton donor in the catalytic mechanism. K58 (proton donor; for beta-elimination activity) is an active-site residue. DNA contacts are provided by R110 and R152. An FPG-type zinc finger spans residues 237–271 (AVYGQTGKPCTVCGTPIARIRLGNRSTWFCPVCQK). Catalysis depends on R261, which acts as the Proton donor; for delta-elimination activity.

The protein belongs to the FPG family. Monomer. Requires Zn(2+) as cofactor.

The catalysed reaction is Hydrolysis of DNA containing ring-opened 7-methylguanine residues, releasing 2,6-diamino-4-hydroxy-5-(N-methyl)formamidopyrimidine.. The enzyme catalyses 2'-deoxyribonucleotide-(2'-deoxyribose 5'-phosphate)-2'-deoxyribonucleotide-DNA = a 3'-end 2'-deoxyribonucleotide-(2,3-dehydro-2,3-deoxyribose 5'-phosphate)-DNA + a 5'-end 5'-phospho-2'-deoxyribonucleoside-DNA + H(+). Functionally, involved in base excision repair of DNA damaged by oxidation or by mutagenic agents. Acts as a DNA glycosylase that recognizes and removes damaged bases. Has a preference for oxidized purines, such as 7,8-dihydro-8-oxoguanine (8-oxoG). Has AP (apurinic/apyrimidinic) lyase activity and introduces nicks in the DNA strand. Cleaves the DNA backbone by beta-delta elimination to generate a single-strand break at the site of the removed base with both 3'- and 5'-phosphates. This is Formamidopyrimidine-DNA glycosylase from Geobacter sulfurreducens (strain ATCC 51573 / DSM 12127 / PCA).